The following is a 278-amino-acid chain: Large ribosomal subunit protein uL2 (278 aa).

The disordered stretch occupies residues 222 to 264 (GVAMNPIDHPHGGGEGRTSGGRHPVTPWGKPTKGRKTRKNKAT).

It belongs to the universal ribosomal protein uL2 family. Part of the 50S ribosomal subunit. Forms a bridge to the 30S subunit in the 70S ribosome.

In terms of biological role, one of the primary rRNA binding proteins. Required for association of the 30S and 50S subunits to form the 70S ribosome, for tRNA binding and peptide bond formation. It has been suggested to have peptidyltransferase activity; this is somewhat controversial. Makes several contacts with the 16S rRNA in the 70S ribosome. In Phenylobacterium zucineum (strain HLK1), this protein is Large ribosomal subunit protein uL2.